The following is a 440-amino-acid chain: MVPEPGPSANSTPAWGAGPPSAPGGSGWVAAALCVVIALTAAANSLLIALICTQPALRNTSNFFLVSLFTSDLMVGLVVMPPAMLNALYGRWVLARGLCLLWTAFDVMCCSASILNLCLISLDRYLLILSPLRYKLRMTPPRALALVLGAWSLAALASFLPLLLGWHELGHARPPVPGQCRLLASLPFVLVASGLTFFLPSGAICFTYCRILLAARKQAVQVASLTTGMASQASETLQVPRTPRPGVESADSRRLATKHSRKALKASLTLGILLGMFFVTWLPFFVANIVQAVCDCISPGLFDVLTWLGYCNSTMNPIIYPLFMRDFKRALGRFLPCPRCPRERQASLASPSLRTSHSGPRPGLSLQQVLPLPLPPDSDSDSDAGSGGSSGLRLTAQLLLPGEATRDPPLPTRAAAAVNFFNIDPAEPELRPHPLGIPTN.

Residues 1–27 (MVPEPGPSANSTPAWGAGPPSAPGGSG) lie on the Extracellular side of the membrane. A helical transmembrane segment spans residues 28–52 (WVAAALCVVIALTAAANSLLIALIC). The Cytoplasmic segment spans residues 53–62 (TQPALRNTSN). Residues 63-88 (FFLVSLFTSDLMVGLVVMPPAMLNAL) traverse the membrane as a helical segment. Over 89 to 96 (YGRWVLAR) the chain is Extracellular. A helical transmembrane segment spans residues 97 to 122 (GLCLLWTAFDVMCCSASILNLCLISL). Cysteines 99 and 180 form a disulfide. A serotonin-binding site is contributed by Asp106. Topologically, residues 123–142 (DRYLLILSPLRYKLRMTPPR) are cytoplasmic. Residues 143-167 (ALALVLGAWSLAALASFLPLLLGWH) form a helical membrane-spanning segment. Residues 168 to 185 (ELGHARPPVPGQCRLLAS) are Extracellular-facing. Residues 186 to 209 (LPFVLVASGLTFFLPSGAICFTYC) form a helical membrane-spanning segment. At 210-266 (RILLAARKQAVQVASLTTGMASQASETLQVPRTPRPGVESADSRRLATKHSRKALKA) the chain is on the cytoplasmic side. The chain crosses the membrane as a helical span at residues 267–293 (SLTLGILLGMFFVTWLPFFVANIVQAV). Residue Asn288 participates in serotonin binding. Topologically, residues 294–299 (CDCISP) are extracellular. A helical transmembrane segment spans residues 300-323 (GLFDVLTWLGYCNSTMNPIIYPLF). Over 324–440 (MRDFKRALGR…RPHPLGIPTN (117 aa)) the chain is Cytoplasmic. The segment at 346–392 (ASLASPSLRTSHSGPRPGLSLQQVLPLPLPPDSDSDSDAGSGGSSGL) is disordered. The span at 347-358 (SLASPSLRTSHS) shows a compositional bias: polar residues. Residues 362–371 (PGLSLQQVLP) are compositionally biased toward low complexity.

Belongs to the G-protein coupled receptor 1 family. Interacts with MTOR, RPTOR and NF1. Interacts with CDK5.

The protein localises to the cell membrane. In terms of biological role, G-protein coupled receptor for 5-hydroxytryptamine (serotonin), a biogenic hormone that functions as a neurotransmitter, a hormone and a mitogen. Also has a high affinity for tricyclic psychotropic drugs. Ligand binding causes a conformation change that triggers signaling via guanine nucleotide-binding proteins (G proteins) and modulates the activity of downstream effectors. HTR6 is coupled to G(s) G alpha proteins and mediates activation of adenylate cyclase activity. Controls pyramidal neurons migration during corticogenesis, through the regulation of CDK5 activity. Is an activator of mTOR signaling. This Pan troglodytes (Chimpanzee) protein is 5-hydroxytryptamine receptor 6 (HTR6).